The chain runs to 213 residues: Orotate phosphoribosyltransferase (213 aa).

Lysine 26 is a 5-phospho-alpha-D-ribose 1-diphosphate binding site. 34-35 (FF) lines the orotate pocket. 5-phospho-alpha-D-ribose 1-diphosphate-binding positions include 72-73 (YK), arginine 98, lysine 99, lysine 102, and 123-131 (DDVISAGTS). Residues serine 127 and arginine 155 each coordinate orotate.

The protein belongs to the purine/pyrimidine phosphoribosyltransferase family. PyrE subfamily. As to quaternary structure, homodimer. Mg(2+) is required as a cofactor.

The enzyme catalyses orotidine 5'-phosphate + diphosphate = orotate + 5-phospho-alpha-D-ribose 1-diphosphate. The protein operates within pyrimidine metabolism; UMP biosynthesis via de novo pathway; UMP from orotate: step 1/2. Its function is as follows. Catalyzes the transfer of a ribosyl phosphate group from 5-phosphoribose 1-diphosphate to orotate, leading to the formation of orotidine monophosphate (OMP). The protein is Orotate phosphoribosyltransferase of Neisseria gonorrhoeae (strain ATCC 700825 / FA 1090).